Consider the following 141-residue polypeptide: 3-hydroxyacyl-[acyl-carrier-protein] dehydratase FabZ (141 aa).

The active site involves H48.

Belongs to the thioester dehydratase family. FabZ subfamily.

The protein localises to the cytoplasm. The catalysed reaction is a (3R)-hydroxyacyl-[ACP] = a (2E)-enoyl-[ACP] + H2O. In terms of biological role, involved in unsaturated fatty acids biosynthesis. Catalyzes the dehydration of short chain beta-hydroxyacyl-ACPs and long chain saturated and unsaturated beta-hydroxyacyl-ACPs. The polypeptide is 3-hydroxyacyl-[acyl-carrier-protein] dehydratase FabZ (Herpetosiphon aurantiacus (strain ATCC 23779 / DSM 785 / 114-95)).